An 835-amino-acid polypeptide reads, in one-letter code: Protein translocase subunit SecA (835 aa).

ATP is bound by residues Gln85, 103–107, and Asp492; that span reads GEGKT. Positions 819, 821, 830, and 831 each coordinate Zn(2+).

It belongs to the SecA family. As to quaternary structure, monomer and homodimer. Part of the essential Sec protein translocation apparatus which comprises SecA, SecYEG and auxiliary proteins SecDF. Other proteins may also be involved. Requires Zn(2+) as cofactor.

It localises to the cell membrane. It is found in the cytoplasm. It carries out the reaction ATP + H2O + cellular proteinSide 1 = ADP + phosphate + cellular proteinSide 2.. In terms of biological role, part of the Sec protein translocase complex. Interacts with the SecYEG preprotein conducting channel. Has a central role in coupling the hydrolysis of ATP to the transfer of proteins into and across the cell membrane, serving as an ATP-driven molecular motor driving the stepwise translocation of polypeptide chains across the membrane. In Clostridium botulinum (strain Loch Maree / Type A3), this protein is Protein translocase subunit SecA.